Reading from the N-terminus, the 211-residue chain is Ribosomal RNA small subunit methyltransferase G (211 aa).

Residues Gly-75, Leu-80, 130–131, and Arg-145 each bind S-adenosyl-L-methionine; that span reads VE.

The protein belongs to the methyltransferase superfamily. RNA methyltransferase RsmG family.

The protein resides in the cytoplasm. It carries out the reaction guanosine(527) in 16S rRNA + S-adenosyl-L-methionine = N(7)-methylguanosine(527) in 16S rRNA + S-adenosyl-L-homocysteine. Specifically methylates the N7 position of guanine in position 527 of 16S rRNA. This is Ribosomal RNA small subunit methyltransferase G from Aromatoleum aromaticum (strain DSM 19018 / LMG 30748 / EbN1) (Azoarcus sp. (strain EbN1)).